The sequence spans 246 residues: MATKQAQKRLTKEYKMMVENPPPFIIARPNEENILEWHYVISGPPDTPYDGGQYHGTLTFPSDYPYKPPAIRMITPNGRFKENTRLCLSMSDYHPDTWNPGWSVATILNGLLSFMTGDESTTGSITTTQQEKKILAKKSMYYNTFNSTRFKLVFPEIVEKNITELQRRKQEEKDMSMFEKKEDPLVKAAREKAIEVKDIVNPEDRIRAEQALKELEKQHNDKPNGSSSMFYIGVALFLFLVGLFMK.

The Cytoplasmic portion of the chain corresponds to 1–224 (MATKQAQKRL…LEKQHNDKPN (224 aa)). In terms of domain architecture, UBC core spans 5-154 (QAQKRLTKEY…FNSTRFKLVF (150 aa)). The Glycyl thioester intermediate role is filled by Cys87. The chain crosses the membrane as a helical span at residues 225-245 (GSSSMFYIGVALFLFLVGLFM).

It belongs to the ubiquitin-conjugating enzyme family.

It is found in the endoplasmic reticulum membrane. The enzyme catalyses S-ubiquitinyl-[E1 ubiquitin-activating enzyme]-L-cysteine + [E2 ubiquitin-conjugating enzyme]-L-cysteine = [E1 ubiquitin-activating enzyme]-L-cysteine + S-ubiquitinyl-[E2 ubiquitin-conjugating enzyme]-L-cysteine.. It functions in the pathway protein modification; protein ubiquitination. In terms of biological role, catalyzes the covalent attachment of ubiquitin to other proteins. Functions in degradation of misfolded or regulated proteins localized in the endoplasmic reticulum (ER) lumen or membrane via the ubiquitin-proteasome system. Cognate E2 conjugating enzyme for the DOA10 ubiquitin ligase complex, which is part of the ERAD-C pathway responsible for the rapid degradation of membrane proteins with misfolded cytoplasmic domains. In Candida glabrata (strain ATCC 2001 / BCRC 20586 / JCM 3761 / NBRC 0622 / NRRL Y-65 / CBS 138) (Yeast), this protein is Ubiquitin-conjugating enzyme E2 6 (UBC6).